A 195-amino-acid chain; its full sequence is dCTP deaminase (195 aa).

DCTP is bound by residues 105-110, D123, 131-133, Q152, Y166, K173, and Q177; these read RSSLGR and TLE. The active-site Proton donor/acceptor is E133. The interval 159–195 is disordered; that stretch reads KTPADRPYGAERGSKYQGQSGPQASKIQGDREFGGDQ. Residues 160 to 172 are compositionally biased toward basic and acidic residues; sequence TPADRPYGAERGS. The segment covering 174–184 has biased composition (polar residues); sequence YQGQSGPQASK. Basic and acidic residues predominate over residues 186–195; that stretch reads QGDREFGGDQ.

This sequence belongs to the dCTP deaminase family. Homotrimer.

The enzyme catalyses dCTP + H2O + H(+) = dUTP + NH4(+). Its pathway is pyrimidine metabolism; dUMP biosynthesis; dUMP from dCTP (dUTP route): step 1/2. In terms of biological role, catalyzes the deamination of dCTP to dUTP. The chain is dCTP deaminase from Haloarcula marismortui (strain ATCC 43049 / DSM 3752 / JCM 8966 / VKM B-1809) (Halobacterium marismortui).